A 305-amino-acid polypeptide reads, in one-letter code: Urease accessory protein UreD (305 aa).

It belongs to the UreD family. UreD, UreF and UreG form a complex that acts as a GTP-hydrolysis-dependent molecular chaperone, activating the urease apoprotein by helping to assemble the nickel containing metallocenter of UreC. The UreE protein probably delivers the nickel.

It localises to the cytoplasm. Its function is as follows. Required for maturation of urease via the functional incorporation of the urease nickel metallocenter. The protein is Urease accessory protein UreD of Delftia acidovorans (strain DSM 14801 / SPH-1).